We begin with the raw amino-acid sequence, 277 residues long: Large ribosomal subunit protein uL2 (277 aa).

A disordered region spans residues 219–277; that stretch reads TVRGSVMNPNDHPHGGGEGRAPIGRKSPMSPWGKPTLGFKTRKKKNKSDKFIVRRRKNK. Basic residues predominate over residues 258-277; that stretch reads KTRKKKNKSDKFIVRRRKNK.

This sequence belongs to the universal ribosomal protein uL2 family. Part of the 50S ribosomal subunit. Forms a bridge to the 30S subunit in the 70S ribosome.

One of the primary rRNA binding proteins. Required for association of the 30S and 50S subunits to form the 70S ribosome, for tRNA binding and peptide bond formation. It has been suggested to have peptidyltransferase activity; this is somewhat controversial. Makes several contacts with the 16S rRNA in the 70S ribosome. This Bacillus subtilis (strain 168) protein is Large ribosomal subunit protein uL2.